We begin with the raw amino-acid sequence, 1330 residues long: Pre-mRNA-splicing factor CWC22 homolog (1330 aa).

Residues 1–377 (MGESDAESDS…AAKITERQRK (377 aa)) are disordered. The segment covering 9–36 (DSSSNSSSSDTSSGSDSDARSESSSSES) has biased composition (low complexity). Residues 46–94 (QEESAKDAKKTDDTDRGEKRAKERDAGQDEQPTEQKKTPAAEPRSERQH) are compositionally biased toward basic and acidic residues. Positions 99–113 (AGVEKQQEEAVAAAE) are enriched in low complexity. Residues 115–135 (ESEKLNEAKKVETPVQRKEEA) are compositionally biased toward basic and acidic residues. The span at 138–148 (SSVTKELNSPK) shows a compositional bias: polar residues. The span at 149-166 (AQEENAARELEERRKDEE) shows a compositional bias: basic and acidic residues. A compositionally biased stretch (polar residues) spans 168-177 (PVTTNGSSKE). Residues Thr191 and Thr201 each carry the phosphothreonine modification. Basic and acidic residues-rich tracts occupy residues 191–201 (TADHIEEGEIT) and 208–236 (LPTK…SPDG). Phosphoserine occurs at positions 219 and 221. Residues 252–277 (SRRRRRSRSKGSRTRSRSKSPIRRRS) are compositionally biased toward basic residues. Composition is skewed to basic and acidic residues over residues 278-307 (NSLE…EREK) and 316-325 (SSRRRDDSRE). A compositionally biased stretch (low complexity) spans 355–366 (TETNADNETVTE). An MIF4G domain is found at 420–603 (KKSIHGYINK…EVLFQIRKDG (184 aa)). A disordered region spans residues 660-697 (REILGSDDGSSSGSGSGSDSDSDSDGESGSDAEKKAEA). The segment covering 665–678 (SDDGSSSGSGSGSD) has biased composition (low complexity). A compositionally biased stretch (acidic residues) spans 679–689 (SDSDSDGESGS). Positions 710 to 826 (ALRRTIYLTI…SWDVLECIQL (117 aa)) constitute an MI domain. The interval 926–1330 (FRDGSAPAGN…RSSRRSKGRS (405 aa)) is disordered. The span at 941 to 951 (SSSSSSSSSSD) shows a compositional bias: low complexity. The segment covering 952–963 (TDSEDSSEEDSS) has biased composition (acidic residues). The span at 964–976 (SDSSSESSSSDSS) shows a compositional bias: low complexity. A compositionally biased stretch (basic residues) spans 980-1012 (KKKRKRKDKDKKKSKKATKEKSKKTKNKKKKKK). Residues 1013 to 1033 (AEKEQEKEKEKQRKSKKEKEK) show a composition bias toward basic and acidic residues. A compositionally biased stretch (basic residues) spans 1034–1054 (DKKRKKEEKKAAKKKSKHRRK). Positions 1072–1082 (SESSDSSNSSS) are enriched in low complexity. The segment covering 1089-1110 (PQAKIKRQEHVEKNKFRGRTQD) has biased composition (basic and acidic residues). Position 1108 is a phosphothreonine (Thr1108). Phosphoserine occurs at positions 1111, 1121, 1180, and 1181. Basic and acidic residues-rich tracts occupy residues 1133–1195 (RRRD…VAHD) and 1203–1320 (SRSY…SRRE). Tyr1182 bears the Phosphotyrosine mark. Positions 1321–1330 (RSSRRSKGRS) are enriched in basic residues.

Belongs to the CWC22 family. Component of the spliceosome C complex. Interacts with eIF4AIII.

Its subcellular location is the nucleus speckle. Its function is as follows. Required for pre-mRNA splicing and for exon-junction complex (EJC) assembly. Hinders eIF4AIII from non-specifically binding RNA and escorts it to the splicing machinery to promote EJC assembly on mature mRNAs. In Drosophila melanogaster (Fruit fly), this protein is Pre-mRNA-splicing factor CWC22 homolog (ncm).